A 219-amino-acid polypeptide reads, in one-letter code: Large ribosomal subunit protein uL4 (219 aa).

Residues 45–103 (ARRQGTHATKTRGQVRGGGRKPYRQKGTGRARQGSIRAPQFTGGGTVHGPQPRDYDQRT) are disordered. The segment covering 62–73 (GGRKPYRQKGTG) has biased composition (basic residues).

The protein belongs to the universal ribosomal protein uL4 family. Part of the 50S ribosomal subunit.

Functionally, one of the primary rRNA binding proteins, this protein initially binds near the 5'-end of the 23S rRNA. It is important during the early stages of 50S assembly. It makes multiple contacts with different domains of the 23S rRNA in the assembled 50S subunit and ribosome. In terms of biological role, forms part of the polypeptide exit tunnel. The sequence is that of Large ribosomal subunit protein uL4 from Corynebacterium kroppenstedtii (strain DSM 44385 / JCM 11950 / CIP 105744 / CCUG 35717).